A 329-amino-acid chain; its full sequence is Malate dehydrogenase (329 aa).

Residue Gly12–Gly18 coordinates NAD(+). Positions 93 and 99 each coordinate substrate. NAD(+)-binding positions include Asn106, Gln113, and Thr130–Asn132. 2 residues coordinate substrate: Asn132 and Arg163. The active-site Proton acceptor is the His188.

It belongs to the LDH/MDH superfamily. MDH type 2 family.

The enzyme catalyses (S)-malate + NAD(+) = oxaloacetate + NADH + H(+). In terms of biological role, catalyzes the reversible oxidation of malate to oxaloacetate. The protein is Malate dehydrogenase of Mycobacterium leprae (strain TN).